The chain runs to 811 residues: Zinc finger CCCH domain-containing protein 11A (811 aa).

3 consecutive C3H1-type zinc fingers follow at residues 2-30, 32-58, and 61-87; these read PNQG…HCEA, LGNE…HMEI, and KRSE…HHNR. Serine 109 bears the Phosphoserine mark. Residues lysine 115 and lysine 125 each participate in a glycyl lysine isopeptide (Lys-Gly) (interchain with G-Cter in SUMO2) cross-link. Phosphoserine is present on serine 133. 4 disordered regions span residues 140-195, 224-258, 286-352, and 368-434; these read MKVE…GLRV, KKMK…KENV, GKRK…EKVN, and ERAS…TCIK. Lysine 141 is covalently cross-linked (Glycyl lysine isopeptide (Lys-Gly) (interchain with G-Cter in SUMO2)). Serine 150 and serine 172 each carry phosphoserine. Residues 161–176 show a composition bias toward acidic residues; that stretch reads ADDDEDDDDQFSEEGD. Position 291 is a phosphoserine (serine 291). Basic and acidic residues-rich tracts occupy residues 310–323 and 368–391; these read KKVE…DKTP and ERAS…KTDD. Position 322 is a phosphothreonine (threonine 322). Positions 363–424 form a coiled coil; the sequence is EEILLERASQ…KHRQQEAERQ (62 aa). The residue at position 371 (serine 371) is a Phosphoserine. Residues 392 to 403 show a composition bias toward polar residues; that stretch reads STSGARSSSTIR. The segment covering 418 to 434 has biased composition (basic and acidic residues); it reads QQEAERQKSKKDTTCIK. Lysine 479 is covalently cross-linked (Glycyl lysine isopeptide (Lys-Gly) (interchain with G-Cter in SUMO2)). The segment at 483–550 is disordered; that stretch reads ALRVQQSSES…KEASGETTGV (68 aa). Over residues 487 to 499 the composition is skewed to low complexity; sequence QQSSESSTSSPSQ. Lysine 620 is covalently cross-linked (Glycyl lysine isopeptide (Lys-Gly) (interchain with G-Cter in SUMO2)). The tract at residues 716 to 769 is disordered; it reads TVPEAENPRDSLVLPPTQSSSDSSPPEVSGPSSSQMSMKTRRLSSASTGKPQLS. The segment covering 730–749 has biased composition (low complexity); it reads PPTQSSSDSSPPEVSGPSSS. A compositionally biased stretch (polar residues) spans 750–766; it reads QMSMKTRRLSSASTGKP.

Interacts with TREX complex components THOC2, DDX39 and POLDIP3; the interactions are ATP-dependent. Interacts with PABPN1; this interaction retains ZC3H11A in nuclear speckles. Interacts with KPNA3.

The protein localises to the nucleus speckle. In terms of biological role, through its association with TREX complex components, may participate in the export and post-transcriptional coordination of selected mRNA transcripts, including those required to maintain the metabolic processes in embryonic cells. Binds RNA. The chain is Zinc finger CCCH domain-containing protein 11A (ZC3H11A) from Pongo abelii (Sumatran orangutan).